The following is a 502-amino-acid chain: NADH-quinone oxidoreductase subunit N (502 aa).

The next 14 membrane-spanning stretches (helical) occupy residues Thr-16–Phe-36, Met-47–Phe-67, Leu-85–Leu-105, Phe-113–Val-133, Leu-138–Met-158, Phe-172–Leu-192, Ile-213–Met-233, Ser-248–Met-268, Phe-273–Thr-293, Met-310–Thr-330, Leu-337–Ile-357, Ala-387–Trp-407, Met-410–Leu-430, and Thr-470–Ile-490.

It belongs to the complex I subunit 2 family. NDH-1 is composed of 14 different subunits. Subunits NuoA, H, J, K, L, M, N constitute the membrane sector of the complex.

It is found in the cell inner membrane. It catalyses the reaction a quinone + NADH + 5 H(+)(in) = a quinol + NAD(+) + 4 H(+)(out). In terms of biological role, NDH-1 shuttles electrons from NADH, via FMN and iron-sulfur (Fe-S) centers, to quinones in the respiratory chain. The immediate electron acceptor for the enzyme in this species is believed to be ubiquinone. Couples the redox reaction to proton translocation (for every two electrons transferred, four hydrogen ions are translocated across the cytoplasmic membrane), and thus conserves the redox energy in a proton gradient. This Sulfurimonas denitrificans (strain ATCC 33889 / DSM 1251) (Thiomicrospira denitrificans (strain ATCC 33889 / DSM 1251)) protein is NADH-quinone oxidoreductase subunit N.